The sequence spans 1342 residues: MHQAITSAQIAHWFTVGAQFANIRITNEAKKAEAEDNATEVRSDKAFSELSSPEKEKSDDGNQRRKRAQLPTGPGTSPPSLASYEYPILPITKNRQELVSLIENNSVVIIRGATGSGKTTQLPQFILDHYAERNIPCNLVVTQPRKIGATSIARWVARERKCTLGSLVGYQVGLEKMATEHTKLIYVTTGVLLQKLVSSKTLTEYSHIFIDEVHERSEELDFLLLVVRKLLRSNSRYVKVILMSATINCIEFAEYFGSPIRNQMNPAYVFEVEGAPYAVEEYYLDELKTMLPVGVNLDLTLPQDPYITEEMYNVAVSLIQSFDEMEAKDHRRSEQTGSTTHPERGSVLVFLPGLAEIQYMKEALSKLVRKRLQVYPLHSTVTLEEQNGVFLVPVPGYRKIILSTNIAESSVTVPDVKYVIDFCLVRQLACDKETNYRCLRITWASKTSCNQRRGRAGRVSKGFCYRLVTRHFWENEIPNFSIPEMLRSPLASTLLKVKLLDMGDPRSVLSTALTPPILGDIERTVLQLKQIGALSVQSNSQRQFDGDLTFLGRVLAQLPVDLQLGKLIVLGHVFGCLEECLIIAASLSLKSFFAMPSLQQLAGYRSKLSFAQNVPSDFIAYVNAFKAWYTSRAKGELRHPKDELEWGKENCIQIKRIREVAELFEDLKKRVSRFNMHISSSSNPTDYTSLHKQRFILQVVIAGALFPNYFSQGEIDEQLASKELSGNDPKTTILIRNLPPFAFLCYKQLQSLFRQCGQVKSIAFDGSRAYVEFHRSCVRESGVLHEVLLALLRSRHTPALHLQVHHADEVEFHAKGKPIAHLRYTRVNVDVQSHTVSPVGVLSSSVNPEKLPTSRDFVINITEVIDVGHFWGFQTDENSVEKQCQLTAALNMRDLRPLSVSLYPNLLCVAPFKDGQQMAKYYRAKVLHILGSNVEVFFVDFGNTTVVPSSSLRELPSDLMTPAFQAQEFCIARMAPSAQSLILGDRWSSRARNRFKTLTSGRSAIVSLFSILHGVMRVDLHISTETGDVSVADLLVQEGHACHTPESFESQQSHEVLISLYEDMASGRFTPSFASGSLNSRMEEDKQLINQLLLHFCSSGSSAPKCKAVVHGPSSPHKVNFHSMSKVSNFRSVNIERDSINCVMVNENPQDWHERMLVAASVSLSASGSRILLKETSLMPHIHGLPSLVTMLFTPVMELRTNEDRTCFTGALCGLGWNSVSQEAVLPEHDIEIAFDVKFEIEDITEINALRGTVNRLVCDGPNGLLNLSQEKISSLQEEARERLIRLFIKTPSRPECTPVYHDKFKKWNLVDRSQQMEIQEKDDGKSKGVLFQLHPITLLNM.

Over residues 31 to 63 (KAEAEDNATEVRSDKAFSELSSPEKEKSDDGNQ) the composition is skewed to basic and acidic residues. Positions 31–81 (KAEAEDNATEVRSDKAFSELSSPEKEKSDDGNQRRKRAQLPTGPGTSPPSL) are disordered. The Helicase ATP-binding domain occupies 99–265 (VSLIENNSVV…FGSPIRNQMN (167 aa)). 112–119 (GATGSGKT) provides a ligand contact to ATP. The DEAH box motif lies at 211-214 (DEVH). Residues 317–503 (SLIQSFDEME…LLKVKLLDMG (187 aa)) form the Helicase C-terminal domain. The Tudor domain occupies 901-962 (SLYPNLLCVA…RELPSDLMTP (62 aa)).

The protein belongs to the DEAD box helicase family. DEAH subfamily.

The protein resides in the cytoplasm. It localises to the nucleus. It carries out the reaction ATP + H2O = ADP + phosphate + H(+). ATP-binding RNA helicase which plays a central role during spermatogenesis by repressing transposable elements and preventing their mobilization, which is essential for the germline integrity. Acts via the piRNA metabolic process, which mediates the repression of transposable elements during meiosis by forming complexes composed of piRNAs and Piwi proteins and governs the methylation and subsequent repression of transposons. Acts downstream of piRNA biogenesis: exclusively required for transposon silencing in the nucleus, suggesting that it acts as a nuclear effector in the nucleus together with piwil4. The protein is ATP-dependent RNA helicase TDRD9 of Danio rerio (Zebrafish).